We begin with the raw amino-acid sequence, 205 residues long: Large ribosomal subunit protein bL25A (205 aa).

This sequence belongs to the bacterial ribosomal protein bL25 family. CTC subfamily. Part of the 50S ribosomal subunit; part of the 5S rRNA/L5/L18/L25 subcomplex. Contacts the 5S rRNA. Binds to the 5S rRNA independently of L5 and L18.

In terms of biological role, this is one of the proteins that binds to the 5S RNA in the ribosome where it forms part of the central protuberance. This Symbiobacterium thermophilum (strain DSM 24528 / JCM 14929 / IAM 14863 / T) protein is Large ribosomal subunit protein bL25A.